A 662-amino-acid chain; its full sequence is MAAENEASQESALGAYSPVDYMSITSFPRLPEDEPAPAVPLRGRKDEDAFLGDPDTDPDSFLKSARLQRLPSSSSEMGSQDGSPLRETRKDPFSAAASECSCRQDGLTVIVTACLTFATGVTVALIMQIYFGDPQIFHQGAVVTDAARCTSLGIEVLSKQGSSVDAAVAAALCLGIVAPHSSGLGGGGVMLVHDIRRNKSHLIDFRESAPGALREEALQRSWETKPGLLVGVPGMVKGLHEAHQLYGRLPWSQVLAFAAAVAQDGFNVTHDLAQALAEQPPPNASDRFRETFLPMGHPPLPGSLLRRPDLAAVLEVLGTYGPAAFYAGGNLTLEMVAEAQHAGGVITEEDFSNYSALLEKPVCGVYRGHLVLSPRPPHTGPALISALNILEGFNLTSLVSREQALHWVAETLKIALALASRLGDPIYDSTITESMDDMLSKVEAAYFRGQINDSQAAPVPLLPIYELNGAPTAAQVLIMGPDDFIVAMVSSLNRPFGSGLITPSGILLNSQMLDFSWPNRTANHPAPSLENSVQPGKRPLSFLLPTVVRPAEGLCGTYLALGANGAARGLSGLTQVLLNVLTLNRNLSDSLARGRLHPDLQTNLLQVDSEFTEEEIEFLEARGHHVEKVDVLSWVHGSRRTNNFIIGVKDPRSPDAAGATIL.

The Cytoplasmic portion of the chain corresponds to 1–106; it reads MAAENEASQE…ASECSCRQDG (106 aa). Phosphoserine occurs at positions 17, 72, 79, and 83. The tract at residues 26–90 is disordered; sequence SFPRLPEDEP…DGSPLRETRK (65 aa). The segment covering 72–83 has biased composition (low complexity); it reads SSSSEMGSQDGS. A helical; Signal-anchor for type II membrane protein membrane pass occupies residues 107 to 127; sequence LTVIVTACLTFATGVTVALIM. Over 128–662 the chain is Extracellular; that stretch reads QIYFGDPQIF…SPDAAGATIL (535 aa). N-linked (GlcNAc...) asparagine glycosylation is found at N198, N267, N283, N330, N353, N394, N452, N519, and N586.

Belongs to the gamma-glutamyltransferase family. In terms of assembly, heterodimer composed of the light and heavy chains. The active site is located in the light chain. In terms of processing, cleaved by autocatalysis into a large and a small subunit and the autocatalytic cleavage is essential to the functional activation of the enzyme.

Its subcellular location is the membrane. It carries out the reaction an N-terminal (5-L-glutamyl)-[peptide] + an alpha-amino acid = 5-L-glutamyl amino acid + an N-terminal L-alpha-aminoacyl-[peptide]. The catalysed reaction is glutathione + H2O = L-cysteinylglycine + L-glutamate. It catalyses the reaction an S-substituted glutathione + H2O = an S-substituted L-cysteinylglycine + L-glutamate. Its pathway is sulfur metabolism; glutathione metabolism. Functionally, hydrolyzes and transfers gamma-glutamyl moieties from glutathione and other gamma-glutamyl compounds to acceptors. This Bos taurus (Bovine) protein is Glutathione hydrolase 7.